Consider the following 128-residue polypeptide: Small ribosomal subunit protein uS8c (128 aa).

The protein belongs to the universal ribosomal protein uS8 family. In terms of assembly, part of the 30S ribosomal subunit.

The protein localises to the plastid. It localises to the chloroplast. Functionally, one of the primary rRNA binding proteins, it binds directly to 16S rRNA central domain where it helps coordinate assembly of the platform of the 30S subunit. The polypeptide is Small ribosomal subunit protein uS8c (rps8) (Welwitschia mirabilis (Tree tumbo)).